The chain runs to 459 residues: MSRLLTIRQAEELHKSIIAYLSANNLSNAASALRGELGLSEEVFDTGTMVKYETLLEKKWTSIVRLQKKIMDLEARCGALQTELNNATPTSLSKRNQDPASWLPKVPARYSLESHRNTINCLAFHPKFSSIASGSDDCMIKIWDWELGELETTLKGHTRAVLDVDYGNTQSGVLLASCSSDLSIKIWNPLEDYKNIRTLLGHEHSVSAVRFIPGRNLLTSASRDKDLRIWDVTTGFCVKTIQGHSGWVRDVCPSFDGNYLFSAGDDVTARLWDITNISNPEAKLTMVGHDHVIECCAVAPQTSYQYLAPMAGLKKEALSKMSAVEFTATGSRDKTIKVWDRRGSCLMTLVGHDNWVRAIVFHPGGKYLLSASDDKSIRCWDLSQDGKCVKTLSDAHGRFVTCLRWAPSVVKEVAPSAESANGQTDTNDLLKSKDNQPQVQIRCVVASGGVDQKLNIFAN.

In terms of domain architecture, LisH spans 9-41 (QAEELHKSIIAYLSANNLSNAASALRGELGLSE). The stretch at 61–88 (TSIVRLQKKIMDLEARCGALQTELNNAT) forms a coiled coil. 8 WD repeats span residues 114-155 (SHRN…TTLK), 157-197 (HTRA…KNIR), 201-240 (GHEHSVSAVRFIPGRNLLTSASRDKDLRIWDVTTGFCVKT), 243-282 (GHSGWVRDVCPSFDGNYLFSAGDDVTARLWDITNISNPEA), 288-349 (GHDH…LMTL), 351-390 (GHDNWVRAIVFHPGGKYLLSASDDKSIRCWDLSQDGKCVK), 395-440 (AHGR…PQVQ), and 442-459 (RCVVASGGVDQKLNIFAN).

The protein belongs to the WD repeat LIS1/nudF family. Self-associates. Interacts with nudE and dynein.

It is found in the cytoplasm. Its subcellular location is the cytoskeleton. The protein localises to the spindle pole. Positively regulates the activity of the minus-end directed microtubule motor protein dynein. May enhance dynein-mediated microtubule sliding by targeting dynein to the microtubule plus end. Required for nuclear migration during vegetative growth as well as development. Required for retrograde early endosome (EE) transport from the hyphal tip. Required for localization of dynein to the mitotic spindle poles. Recruits additional proteins to the dynein complex at SPBs. This Talaromyces marneffei (strain ATCC 18224 / CBS 334.59 / QM 7333) (Penicillium marneffei) protein is Nuclear distribution protein nudF 1.